A 118-amino-acid polypeptide reads, in one-letter code: UPF0102 protein RSal33209_1090 (118 aa).

Belongs to the UPF0102 family.

The protein is UPF0102 protein RSal33209_1090 of Renibacterium salmoninarum (strain ATCC 33209 / DSM 20767 / JCM 11484 / NBRC 15589 / NCIMB 2235).